The sequence spans 779 residues: Catalase-peroxidase (779 aa).

The segment at residues 148-270 is a cross-link (tryptophyl-tyrosyl-methioninium (Trp-Tyr) (with M-296)); that stretch reads WHSAGTYRIT…LGAVQMGLIY (123 aa). Residue His-149 is the Proton acceptor of the active site. Positions 270–296 form a cross-link, tryptophyl-tyrosyl-methioninium (Tyr-Met) (with W-148); it reads YVNPEGPNGKPDPIAAAKDIRETFFRM. Heme b is bound at residue His-311.

This sequence belongs to the peroxidase family. Peroxidase/catalase subfamily. In terms of assembly, homodimer or homotetramer. Requires heme b as cofactor. In terms of processing, formation of the three residue Trp-Tyr-Met cross-link is important for the catalase, but not the peroxidase activity of the enzyme.

It catalyses the reaction H2O2 + AH2 = A + 2 H2O. It carries out the reaction 2 H2O2 = O2 + 2 H2O. Bifunctional enzyme with both catalase and broad-spectrum peroxidase activity. The polypeptide is Catalase-peroxidase (Bradyrhizobium diazoefficiens (strain JCM 10833 / BCRC 13528 / IAM 13628 / NBRC 14792 / USDA 110)).